Consider the following 62-residue polypeptide: Small ribosomal subunit protein bS21 (62 aa).

Residues Val-43 to Ala-52 are compositionally biased toward basic and acidic residues. The segment at Val-43–Phe-62 is disordered. A compositionally biased stretch (basic residues) spans Arg-53 to Phe-62.

Belongs to the bacterial ribosomal protein bS21 family.

In Levilactobacillus brevis (strain ATCC 367 / BCRC 12310 / CIP 105137 / JCM 1170 / LMG 11437 / NCIMB 947 / NCTC 947) (Lactobacillus brevis), this protein is Small ribosomal subunit protein bS21.